A 36-amino-acid chain; its full sequence is Photosystem I reaction center subunit VIII (36 aa).

The chain crosses the membrane as a helical span at residues 10–29 (FVPLVGLVFPAIAMASLFLY).

The protein belongs to the PsaI family.

Its subcellular location is the plastid. The protein resides in the chloroplast thylakoid membrane. Its function is as follows. May help in the organization of the PsaL subunit. The protein is Photosystem I reaction center subunit VIII of Oryza nivara (Indian wild rice).